The following is a 347-amino-acid chain: S-adenosylmethionine:tRNA ribosyltransferase-isomerase (347 aa).

The protein belongs to the QueA family. As to quaternary structure, monomer.

It is found in the cytoplasm. The catalysed reaction is 7-aminomethyl-7-carbaguanosine(34) in tRNA + S-adenosyl-L-methionine = epoxyqueuosine(34) in tRNA + adenine + L-methionine + 2 H(+). Its pathway is tRNA modification; tRNA-queuosine biosynthesis. Functionally, transfers and isomerizes the ribose moiety from AdoMet to the 7-aminomethyl group of 7-deazaguanine (preQ1-tRNA) to give epoxyqueuosine (oQ-tRNA). This is S-adenosylmethionine:tRNA ribosyltransferase-isomerase from Streptococcus thermophilus (strain CNRZ 1066).